The following is a 342-amino-acid chain: N-acetyl-gamma-glutamyl-phosphate reductase (342 aa).

Residue Cys149 is part of the active site.

Belongs to the NAGSA dehydrogenase family. Type 1 subfamily.

The protein localises to the cytoplasm. The catalysed reaction is N-acetyl-L-glutamate 5-semialdehyde + phosphate + NADP(+) = N-acetyl-L-glutamyl 5-phosphate + NADPH + H(+). It participates in amino-acid biosynthesis; L-arginine biosynthesis; N(2)-acetyl-L-ornithine from L-glutamate: step 3/4. Catalyzes the NADPH-dependent reduction of N-acetyl-5-glutamyl phosphate to yield N-acetyl-L-glutamate 5-semialdehyde. This Nitrosomonas europaea (strain ATCC 19718 / CIP 103999 / KCTC 2705 / NBRC 14298) protein is N-acetyl-gamma-glutamyl-phosphate reductase.